Consider the following 1566-residue polypeptide: Arginine-glutamic acid dipeptide repeats protein (1566 aa).

The segment covering 1–36 has biased composition (basic and acidic residues); sequence MTADKDKDKDKEKDRDRDRDREREKRDKARESENSR. The tract at residues 1 to 90 is disordered; sequence MTADKDKDKD…KKKSRYERTD (90 aa). Phosphoserine is present on residues Ser-53 and Ser-56. Residues 74 to 85 show a composition bias toward basic residues; it reads KNKKKPPKKKSR. The BAH domain maps to 103–283; that stretch reads VVYRPGDCVY…PETRRLNSTQ (181 aa). Thr-120 carries the post-translational modification Phosphothreonine. 2 positions are modified to phosphoserine: Ser-142 and Ser-304. Residues 284-387 form the ELM2 domain; sequence GEIRVGPSHQ…KALQRLVKKP (104 aa). One can recognise an SANT domain in the interval 391–443; it reads LIEKCWTEDEVKRFVKGLRQYGKNFFRIRKELLPNKETGELITFYYYWKKTPE. The disordered stretch occupies residues 464-495; sequence TRTASTPVNTPSRPPSSEFLDLSSASEDDFDS. Polar residues predominate over residues 465–474; it reads RTASTPVNTP. Low complexity predominate over residues 479-488; sequence SSEFLDLSSA. The GATA-type zinc finger occupies 507–532; sequence CRHCFTTTSKDWHHGGRENILLCTDC. The interval 542-1133 is disordered; the sequence is LPPIEKPVDP…PSHASQSARF (592 aa). Residue Lys-560 forms a Glycyl lysine isopeptide (Lys-Gly) (interchain with G-Cter in SUMO2) linkage. Ser-594, Ser-600, and Ser-613 each carry phosphoserine. The segment covering 609-623 has biased composition (low complexity); the sequence is SGRNSPSAASTSSND. The span at 624–640 shows a compositional bias: basic and acidic residues; that stretch reads SKAETVKKSAKKVKEEA. Residue Lys-637 forms a Glycyl lysine isopeptide (Lys-Gly) (interchain with G-Cter in SUMO2) linkage. 4 positions are modified to phosphoserine: Ser-642, Ser-656, Ser-675, and Ser-679. Over residues 652 to 673 the composition is skewed to basic and acidic residues; that stretch reads EKVASDTEEADRTSSKKTKTQE. The span at 688 to 708 shows a compositional bias: basic and acidic residues; it reads SDSRSVNDEGSSDPKDIDQDN. Over residues 709–720 the composition is skewed to polar residues; sequence RSTSPSIPSPQD. Residues 726 to 751 are compositionally biased toward low complexity; it reads DSSAQQQMLQAQPPALQAPTGVTPAP. A compositionally biased stretch (pro residues) spans 752-767; it reads SSAPPGTPQLPTPGPT. Positions 778–796 are enriched in low complexity; it reads SPTASQAPNQPQAPTAPVP. The span at 809 to 827 shows a compositional bias: pro residues; it reads QRPPSPHPPPHPSPHPPLQ. The segment covering 829-840 has biased composition (polar residues); the sequence is LTGSAGQPSAPS. Composition is skewed to low complexity over residues 843-865 and 897-913; these read QPPLHGQGPPGPHSLQAGPLLQH and SLQLPASQSALQSQQPP. The span at 914 to 940 shows a compositional bias: pro residues; the sequence is REQPLPPAPLAMPHIKPPPTTPIPQLP. Over residues 970–980 the composition is skewed to low complexity; sequence KPLSSLSTHHP. Residues 1030–1052 are compositionally biased toward pro residues; it reads PQPPFAQHPFVPGGPPPITPPTC. A compositionally biased stretch (low complexity) spans 1053 to 1085; that stretch reads PSTSTPPAGPGTSAQPPCSGAAASGGSIAGGSS. Ser-1106, Ser-1113, and Ser-1115 each carry phosphoserine. The span at 1106–1117 shows a compositional bias: pro residues; sequence SPPPPPRSPSPE. Phosphothreonine is present on Thr-1119. Residues 1156–1211 are a coiled coil; it reads GSKLAKKREEAIEKAKREAEQKAREEREREKEKEKEREREREREREAERAAKASSS. Lys-1158 is subject to N6-acetyllysine. The segment covering 1162–1206 has biased composition (basic and acidic residues); sequence KREEAIEKAKREAEQKAREEREREKEKEKEREREREREREAERAA. Positions 1162–1246 are disordered; the sequence is KREEAIEKAK…TTIAAVPPYI (85 aa). Tyr-1259 carries the phosphotyrosine modification. Position 1266 is a phosphoserine (Ser-1266).

In terms of assembly, interacts with HDAC1. Interacts with ATN1. Interaction with ATN1 is improved when the poly-Gln region of ATN1 is extended. Interacts with FAT1. In terms of tissue distribution, widely expressed. Expressed in tumor cell lines.

The protein localises to the nucleus. Its function is as follows. Plays a role as a transcriptional repressor during development. May play a role in the control of cell survival. Overexpression of RERE recruits BAX to the nucleus particularly to POD and triggers caspase-3 activation, leading to cell death. The sequence is that of Arginine-glutamic acid dipeptide repeats protein (RERE) from Homo sapiens (Human).